A 495-amino-acid chain; its full sequence is Transmembrane protein 161A (495 aa).

A signal peptide spans Met1 to Ala28. The Extracellular segment spans residues Arg29 to Arg99. Asn34 carries N-linked (GlcNAc...) asparagine glycosylation. The chain crosses the membrane as a helical span at residues Phe100–Phe120. At Thr121–Asn135 the chain is on the cytoplasmic side. Residues Ile136 to Met156 traverse the membrane as a helical segment. The Extracellular portion of the chain corresponds to Ser157 to Glu167. The chain crosses the membrane as a helical span at residues Arg168–Val188. Residues Arg189–Ser227 lie on the Cytoplasmic side of the membrane. The chain crosses the membrane as a helical span at residues Val228 to Leu248. At Arg249–Pro265 the chain is on the extracellular side. Residues Met266–Ile286 form a helical membrane-spanning segment. Residues Lys287–Thr305 lie on the Cytoplasmic side of the membrane. The chain crosses the membrane as a helical span at residues Leu306–Leu326. Residues Arg327–Arg367 lie on the Extracellular side of the membrane. Residues Ile368–Phe388 form a helical membrane-spanning segment. Topologically, residues Ser389 to Gly465 are cytoplasmic. The chain crosses the membrane as a helical span at residues Ile466 to Ile486. Topologically, residues Tyr487–Asn495 are extracellular.

The protein belongs to the TMEM161 family.

It localises to the membrane. Its function is as follows. May play a role in protection against oxidative stress. This is Transmembrane protein 161A (tmem161a) from Danio rerio (Zebrafish).